A 172-amino-acid polypeptide reads, in one-letter code: Type VI secretion system sheath protein TssB1 (172 aa).

In terms of assembly, forms a heterodimer with TssC1. Heterodimers assemble to form the sheath of the T6SS machinery. Interacts with TagJ. Interacts with TssA1.

Functionally, core component of the H1 type VI (H1-T6SS) secretion system that plays a role in the release of toxins targeting both eukaryotic and prokaryotic species. Forms the sheath of the structure by assembling into tubules together with TssC1 resulting in the stacking of cogwheel-like structures showing predominantly a 12-fold symmetry. The sheath contracts to provide the energy needed for effector delivery. The sequence is that of Type VI secretion system sheath protein TssB1 from Pseudomonas aeruginosa (strain ATCC 15692 / DSM 22644 / CIP 104116 / JCM 14847 / LMG 12228 / 1C / PRS 101 / PAO1).